A 264-amino-acid polypeptide reads, in one-letter code: Thiazole synthase (264 aa).

Lys-106 serves as the catalytic Schiff-base intermediate with DXP. Residues Gly-167, 193–194 (AG), and 215–216 (NT) contribute to the 1-deoxy-D-xylulose 5-phosphate site.

This sequence belongs to the ThiG family. Homotetramer. Forms heterodimers with either ThiH or ThiS.

It is found in the cytoplasm. The enzyme catalyses [ThiS sulfur-carrier protein]-C-terminal-Gly-aminoethanethioate + 2-iminoacetate + 1-deoxy-D-xylulose 5-phosphate = [ThiS sulfur-carrier protein]-C-terminal Gly-Gly + 2-[(2R,5Z)-2-carboxy-4-methylthiazol-5(2H)-ylidene]ethyl phosphate + 2 H2O + H(+). Its pathway is cofactor biosynthesis; thiamine diphosphate biosynthesis. Catalyzes the rearrangement of 1-deoxy-D-xylulose 5-phosphate (DXP) to produce the thiazole phosphate moiety of thiamine. Sulfur is provided by the thiocarboxylate moiety of the carrier protein ThiS. In vitro, sulfur can be provided by H(2)S. The chain is Thiazole synthase from Stenotrophomonas maltophilia (strain R551-3).